The chain runs to 863 residues: Leucine--tRNA ligase (863 aa).

The 'HIGH' region signature appears at 42 to 52 (PYPSGRLHMGH). The 'KMSKS' region signature appears at 622–626 (KMSKS). Lys625 provides a ligand contact to ATP.

Belongs to the class-I aminoacyl-tRNA synthetase family.

Its subcellular location is the cytoplasm. It catalyses the reaction tRNA(Leu) + L-leucine + ATP = L-leucyl-tRNA(Leu) + AMP + diphosphate. In Shewanella loihica (strain ATCC BAA-1088 / PV-4), this protein is Leucine--tRNA ligase.